A 227-amino-acid chain; its full sequence is Phosphoribosylformylglycinamidine synthase subunit PurQ (227 aa).

The Glutamine amidotransferase type-1 domain occupies 2-226; it reads KFAVIQFPGS…VKAWKEEQVN (225 aa). C86 functions as the Nucleophile in the catalytic mechanism. Catalysis depends on residues H195 and E197.

In terms of assembly, part of the FGAM synthase complex composed of 1 PurL, 1 PurQ and 2 PurS subunits.

The protein localises to the cytoplasm. The enzyme catalyses N(2)-formyl-N(1)-(5-phospho-beta-D-ribosyl)glycinamide + L-glutamine + ATP + H2O = 2-formamido-N(1)-(5-O-phospho-beta-D-ribosyl)acetamidine + L-glutamate + ADP + phosphate + H(+). It carries out the reaction L-glutamine + H2O = L-glutamate + NH4(+). It functions in the pathway purine metabolism; IMP biosynthesis via de novo pathway; 5-amino-1-(5-phospho-D-ribosyl)imidazole from N(2)-formyl-N(1)-(5-phospho-D-ribosyl)glycinamide: step 1/2. Part of the phosphoribosylformylglycinamidine synthase complex involved in the purines biosynthetic pathway. Catalyzes the ATP-dependent conversion of formylglycinamide ribonucleotide (FGAR) and glutamine to yield formylglycinamidine ribonucleotide (FGAM) and glutamate. The FGAM synthase complex is composed of three subunits. PurQ produces an ammonia molecule by converting glutamine to glutamate. PurL transfers the ammonia molecule to FGAR to form FGAM in an ATP-dependent manner. PurS interacts with PurQ and PurL and is thought to assist in the transfer of the ammonia molecule from PurQ to PurL. This chain is Phosphoribosylformylglycinamidine synthase subunit PurQ, found in Listeria monocytogenes serotype 4b (strain CLIP80459).